The sequence spans 479 residues: Probable periplasmic serine endoprotease DegP-like (479 aa).

The N-terminal stretch at 1 to 27 (MSIPRMKSYFSLIAAVLMLGQVATAQA) is a signal peptide. Residues 77 to 99 (LERSMPPGSRPPGAGKGDRQRET) are disordered. Residues histidine 119, aspartate 149, and serine 222 each act as charge relay system in the active site. Substrate is bound by residues 220–222 (GNS) and 277–281 (LGVVI). PDZ domains are found at residues 266 to 357 (LKAS…IRDG) and 363 to 468 (TVTV…LRQG).

Belongs to the peptidase S1C family.

The protein localises to the periplasm. It catalyses the reaction Acts on substrates that are at least partially unfolded. The cleavage site P1 residue is normally between a pair of hydrophobic residues, such as Val-|-Val.. Might be efficient in the degradation of transiently denatured and unfolded proteins which accumulate in the periplasm following stress conditions. In Pseudomonas savastanoi pv. phaseolicola (strain 1448A / Race 6) (Pseudomonas syringae pv. phaseolicola (strain 1448A / Race 6)), this protein is Probable periplasmic serine endoprotease DegP-like (mucD).